We begin with the raw amino-acid sequence, 600 residues long: Threonine dehydratase, mitochondrial (600 aa).

Lys144 is subject to N6-(pyridoxal phosphate)lysine. 2 consecutive ACT-like domains span residues 425 to 497 and 519 to 590; these read VFLS…DISD and RLYR…DETN.

This sequence belongs to the serine/threonine dehydratase family. Homotetramer. It depends on pyridoxal 5'-phosphate as a cofactor.

The protein localises to the mitochondrion. It localises to the cytoplasm. It carries out the reaction L-threonine = 2-oxobutanoate + NH4(+). Its pathway is amino-acid biosynthesis; L-isoleucine biosynthesis; 2-oxobutanoate from L-threonine: step 1/1. Isoleucine allosterically inhibits while valine allosterically activates this enzyme. The protein is Threonine dehydratase, mitochondrial of Schizosaccharomyces pombe (strain 972 / ATCC 24843) (Fission yeast).